We begin with the raw amino-acid sequence, 250 residues long: Leucyl/phenylalanyl-tRNA--protein transferase (250 aa).

The disordered stretch occupies residues 1–21 (MTPFRRPTVLGTSASAPFPPA).

Belongs to the L/F-transferase family.

It is found in the cytoplasm. It catalyses the reaction N-terminal L-lysyl-[protein] + L-leucyl-tRNA(Leu) = N-terminal L-leucyl-L-lysyl-[protein] + tRNA(Leu) + H(+). It carries out the reaction N-terminal L-arginyl-[protein] + L-leucyl-tRNA(Leu) = N-terminal L-leucyl-L-arginyl-[protein] + tRNA(Leu) + H(+). The enzyme catalyses L-phenylalanyl-tRNA(Phe) + an N-terminal L-alpha-aminoacyl-[protein] = an N-terminal L-phenylalanyl-L-alpha-aminoacyl-[protein] + tRNA(Phe). Functionally, functions in the N-end rule pathway of protein degradation where it conjugates Leu, Phe and, less efficiently, Met from aminoacyl-tRNAs to the N-termini of proteins containing an N-terminal arginine or lysine. In Xanthomonas euvesicatoria pv. vesicatoria (strain 85-10) (Xanthomonas campestris pv. vesicatoria), this protein is Leucyl/phenylalanyl-tRNA--protein transferase.